The chain runs to 592 residues: Pectinesterase/pectinesterase inhibitor 3 (592 aa).

Residues 1-35 (MAPSMKEIFSKDNFKKNKKLVLLSAAVALLFVAAV) form the signal peptide. The propeptide at 36–238 (AGISAGASKA…KITSNNRKLK (203 aa)) is removed in mature 42 kDa form. Positions 36-273 (AGISAGASKA…WLSAGDRRLL (238 aa)) are cleaved as a propeptide — removed in mature 38 kDa form. Residues 53–212 (PSSHAVLRSS…EHMCSNALAM (160 aa)) form a pectinesterase inhibitor 3 region. Asn-96 and Asn-215 each carry an N-linked (GlcNAc...) asparagine glycan. Residues 281-578 (DATVAADGSG…YTAGQFIGGG (298 aa)) are pectinesterase 3. Substrate contacts are provided by Thr-356 and Gln-386. The Proton donor; for pectinesterase activity role is filled by Asp-409. Cys-423 and Cys-443 are oxidised to a cystine. The active-site Nucleophile; for pectinesterase activity is Asp-430. Substrate is bound by residues Gln-454, Arg-498, and Trp-500.

In the N-terminal section; belongs to the PMEI family. It in the C-terminal section; belongs to the pectinesterase family. As to quaternary structure, interacts with BIIDXI and At5g11420. Binds reversibly to PMEI4, PMEI7 and PMEI8 to be inhibited; the stability of the PME3-PMEIs complexes and the inhibition of the pectin methylesterase (PME) activity is pH-dependent, based on protonation status of amino-acids at the complex interface. As to expression, expressed in roots, cotyledons, hypocotyls, seedlings, leaves, stems, flowers, dry seeds and siliques. Accumulates in etiolated hypocotyls (at protein level).

Its subcellular location is the secreted. The protein resides in the extracellular space. It is found in the apoplast. The protein localises to the cell wall. The catalysed reaction is [(1-&gt;4)-alpha-D-galacturonosyl methyl ester](n) + n H2O = [(1-&gt;4)-alpha-D-galacturonosyl](n) + n methanol + n H(+). Its pathway is glycan metabolism; pectin degradation; 2-dehydro-3-deoxy-D-gluconate from pectin: step 1/5. Its activity is regulated as follows. Regulated negatively by pectinesterase inhibitors (e.g. PMEI3, PMEI4, PMEI7 and PMEI9) in a pH-dependent manner, mainly in slightly acidic conditions (pH 6.0 and 5.0), especially in dark-grown hypocotyls; this processus relies on changes in the protonation of amino acids involved in intermolecular and intramolecular interactions. Acts in the modification of cell walls via demethylesterification of cell wall pectin. Required for zinc Zn(2+) homeostasis and to monitor Zn(2+) influence on cell wall-controlled growth processes such as root cell elongation. Monitors seed germination and favors root hairs production. Prevents cruciferin seed storage proteins activity, but promotes the expression of genes involved in cell wall organization and remodeling as well as genes involved in lipid and protein metabolism, during post-germinative growth of seedlings. Confers sensitivity to Zn(2+) when overexpressed. Acts as a susceptibility factor required for the initial colonization of the host tissue by virulent pathogens including Botrytis cinerea and Pectobacterium carotovorum, probably by facilitating cell wall pectine degradation by pathogen pectic enzymes after its demethylesterification. This Arabidopsis thaliana (Mouse-ear cress) protein is Pectinesterase/pectinesterase inhibitor 3.